The sequence spans 173 residues: Shikimate kinase 1 (173 aa).

14-19 (GAGKST) serves as a coordination point for ATP. Position 18 (S18) interacts with Mg(2+). Substrate-binding residues include D36, R60, and G82. Position 120 (R120) interacts with ATP. R140 provides a ligand contact to substrate. Q157 is an ATP binding site.

It belongs to the shikimate kinase family. As to quaternary structure, monomer. Requires Mg(2+) as cofactor.

Its subcellular location is the cytoplasm. It carries out the reaction shikimate + ATP = 3-phosphoshikimate + ADP + H(+). Its pathway is metabolic intermediate biosynthesis; chorismate biosynthesis; chorismate from D-erythrose 4-phosphate and phosphoenolpyruvate: step 5/7. Its function is as follows. Catalyzes the specific phosphorylation of the 3-hydroxyl group of shikimic acid using ATP as a cosubstrate. This Sodalis glossinidius (strain morsitans) protein is Shikimate kinase 1.